A 579-amino-acid chain; its full sequence is Eukaryotic translation initiation factor 3 subunit D (579 aa).

Disordered regions lie at residues 1 to 20, 51 to 72, and 109 to 170; these read MASF…GPAS, NASG…RARD, and RRGG…FGWK. The segment covering 51–64 has biased composition (low complexity); that stretch reads NASGASNDAANARG. Over residues 120-167 the composition is skewed to gly residues; that stretch reads GGRGGRGGAGGAGAAGGRGASKFGAGAGRGARGGRGGAAGARRGGGRF. The tract at residues 307–321 is RNA gate; sequence AFDYLTVNENAADPP.

The protein belongs to the eIF-3 subunit D family. In terms of assembly, component of the eukaryotic translation initiation factor 3 (eIF-3) complex.

The protein localises to the cytoplasm. Its function is as follows. mRNA cap-binding component of the eukaryotic translation initiation factor 3 (eIF-3) complex, which is involved in protein synthesis of a specialized repertoire of mRNAs and, together with other initiation factors, stimulates binding of mRNA and methionyl-tRNAi to the 40S ribosome. The eIF-3 complex specifically targets and initiates translation of a subset of mRNAs involved in cell proliferation. In the eIF-3 complex, eif3d specifically recognizes and binds the 7-methylguanosine cap of a subset of mRNAs. This Mycosarcoma maydis (Corn smut fungus) protein is Eukaryotic translation initiation factor 3 subunit D.